We begin with the raw amino-acid sequence, 89 residues long: Small ribosomal subunit protein uS17 (89 aa).

It belongs to the universal ribosomal protein uS17 family. In terms of assembly, part of the 30S ribosomal subunit.

Its function is as follows. One of the primary rRNA binding proteins, it binds specifically to the 5'-end of 16S ribosomal RNA. This chain is Small ribosomal subunit protein uS17, found in Nocardia farcinica (strain IFM 10152).